We begin with the raw amino-acid sequence, 148 residues long: Lysozyme C (148 aa).

Positions 1-18 are cleaved as a signal peptide; it reads MKAVIILGLVLLSVTVQG. The 130-residue stretch at 19–148 folds into the C-type lysozyme domain; it reads KIFERCELAR…VSQYVQGCGV (130 aa). 4 cysteine pairs are disulfide-bonded: C24-C146, C48-C134, C83-C99, and C95-C113. Residues E53 and D71 contribute to the active site.

Belongs to the glycosyl hydrolase 22 family. Monomer.

The enzyme catalyses Hydrolysis of (1-&gt;4)-beta-linkages between N-acetylmuramic acid and N-acetyl-D-glucosamine residues in a peptidoglycan and between N-acetyl-D-glucosamine residues in chitodextrins.. Functionally, lysozymes have primarily a bacteriolytic function; those in tissues and body fluids are associated with the monocyte-macrophage system and enhance the activity of immunoagents. This chain is Lysozyme C (LYZ), found in Erythrocebus patas (Red guenon).